We begin with the raw amino-acid sequence, 156 residues long: Perlucin-like protein (156 aa).

The first 22 residues, 1–22 (MGKLTVVGILTLFIFYIVAASG), serve as a signal peptide directing secretion. 3 cysteine pairs are disulfide-bonded: cysteine 30–cysteine 41, cysteine 58–cysteine 156, and cysteine 131–cysteine 147. The 120-residue stretch at 37 to 156 (YKTNCYFFSP…CNTDQMGYIC (120 aa)) folds into the C-type lectin domain.

As to expression, component of the organic matrix of calcified shell layers like nacre and prisms.

It localises to the secreted. This is Perlucin-like protein from Mytilus galloprovincialis (Mediterranean mussel).